The following is a 283-amino-acid chain: NAD(P)H-hydrate epimerase (283 aa).

The N-terminal 28 residues, 1-28 (MLGVRALFGIGLLVTSRGGFVLTHTRAC), are a transit peptide targeting the mitochondrion. A YjeF N-terminal domain is found at 61–270 (AQQIDEELFS…VLEQKYQLNL (210 aa)). Residue 115–119 (NNGGD) participates in (6S)-NADPHX binding. Asn-116 and Asp-180 together coordinate K(+). Residues 184 to 190 (GFSFKGA) and Asp-213 contribute to the (6S)-NADPHX site. Ser-216 is a binding site for K(+).

Belongs to the NnrE/AIBP family. In terms of assembly, homodimer. Interacts with apoa1a. Binds to high-density lipoprotein. K(+) serves as cofactor.

It is found in the mitochondrion. Its subcellular location is the secreted. The catalysed reaction is (6R)-NADHX = (6S)-NADHX. The enzyme catalyses (6R)-NADPHX = (6S)-NADPHX. Its function is as follows. Catalyzes the epimerization of the S- and R-forms of NAD(P)HX, a damaged form of NAD(P)H that is a result of enzymatic or heat-dependent hydration. This is a prerequisite for the S-specific NAD(P)H-hydrate dehydratase to allow the repair of both epimers of NAD(P)HX. This Danio rerio (Zebrafish) protein is NAD(P)H-hydrate epimerase.